A 566-amino-acid polypeptide reads, in one-letter code: Oxygen-dependent choline dehydrogenase (566 aa).

7-36 (DYIICGAGSAGNVLATRLTEDPDVTVLLLE) provides a ligand contact to FAD. Residues 180 to 202 (NGYQQEGFGPMDRTVTPKGRRAS) are disordered. The Proton acceptor role is filled by H474.

It belongs to the GMC oxidoreductase family. The cofactor is FAD.

The catalysed reaction is choline + A = betaine aldehyde + AH2. The enzyme catalyses betaine aldehyde + NAD(+) + H2O = glycine betaine + NADH + 2 H(+). It functions in the pathway amine and polyamine biosynthesis; betaine biosynthesis via choline pathway; betaine aldehyde from choline (cytochrome c reductase route): step 1/1. In terms of biological role, involved in the biosynthesis of the osmoprotectant glycine betaine. Catalyzes the oxidation of choline to betaine aldehyde and betaine aldehyde to glycine betaine at the same rate. This is Oxygen-dependent choline dehydrogenase from Burkholderia orbicola (strain MC0-3).